The primary structure comprises 356 residues: Nicotinate-nucleotide--dimethylbenzimidazole phosphoribosyltransferase (356 aa).

The Proton acceptor role is filled by E317.

Belongs to the CobT family. As to quaternary structure, homodimer.

It catalyses the reaction 5,6-dimethylbenzimidazole + nicotinate beta-D-ribonucleotide = alpha-ribazole 5'-phosphate + nicotinate + H(+). It functions in the pathway nucleoside biosynthesis; alpha-ribazole biosynthesis; alpha-ribazole from 5,6-dimethylbenzimidazole: step 1/2. Its function is as follows. Catalyzes the synthesis of alpha-ribazole-5'-phosphate from nicotinate mononucleotide (NAMN) and 5,6-dimethylbenzimidazole (DMB). This Salmonella agona (strain SL483) protein is Nicotinate-nucleotide--dimethylbenzimidazole phosphoribosyltransferase.